The primary structure comprises 128 residues: Large ribosomal subunit protein mL51 (128 aa).

The transit peptide at 1 to 31 directs the protein to the mitochondrion; sequence MAGSLSWVAGRRLWGLVPLACRSFFLGVPRL.

This sequence belongs to the mitochondrion-specific ribosomal protein mL51 family. In terms of assembly, component of the mitochondrial ribosome large subunit (39S) which comprises a 16S rRNA and about 50 distinct proteins. Interacts with OXA1L.

The protein resides in the mitochondrion. The polypeptide is Large ribosomal subunit protein mL51 (MRPL51) (Bos taurus (Bovine)).